A 1349-amino-acid chain; its full sequence is Periaxin (1349 aa).

S7 is subject to Phosphoserine. In terms of domain architecture, PDZ spans 16-99 (LVEIIVETEA…YKVSFCLKRT (84 aa)). Residues 70-84 (VFFENFKYEDALRLL) carry the Nuclear export signal motif. At S133 the chain carries Phosphoserine. Tandem repeats lie at residues 402–406 (PPEVK), 410–414 (GPEVK), 418–422 (VPEVK), 426–430 (MPEPV), 431–435 (LPEVR), 436–440 (LPEVE), 444–448 (VSEMK), 452–456 (VPEMA), 457–461 (VPEVR), 462–466 (LPEVQ), 467–471 (LPKVP), 472–476 (EMKLP), 477–481 (EVKLP), 485–489 (EMAVP), 493–497 (LPEVQ), 501–505 (VPEMK), 506–510 (LPEVK), 514–518 (VPEMA), 519–523 (VPEVR), 524–528 (LPEVQ), 532–536 (VPEMK), 537–549 (LPKV…PEMK), 553–557 (VPEMA), 558–562 (VPEVR), 563–567 (LPEVQ), 571–575 (VPEVK), 576–580 (LPEVK), 589–593 (VPEMA), 594–598 (VPEVH), 599–603 (LPEVQ), 612–616 (VPDVK), 617–621 (LPEVK), 622–626 (LPEIK), 630–634 (VPEMV), 635–639 (VPDVH), 643–647 (VHLPK), 648–652 (VSEMR), 653–657 (LPEVQ), 661–665 (VPEVH), 669–673 (APEVK), and 674–678 (LPKAP). The 41 X 5 AA approximate tandem repeats of [LVMGIE]-[PSM]-[EDKA]-[LIVMA]-[AQKHPRT]; that may have a tripeptide spacer of [ALKD]-[IPV]-[KPH] stretch occupies residues 402–678 (PPEVKVPKGP…APEVKLPKAP (277 aa)). Residues S794 and S974 each carry the phosphoserine modification. Over residues 1207–1218 (AKEGAEEGEKAK) the composition is skewed to basic and acidic residues. Residues 1207 to 1349 (AKEGAEEGEK…RMEGAQAAVI (143 aa)) are disordered. The span at 1232-1242 (SEAVSGEGSPS) shows a compositional bias: low complexity. 6 positions are modified to phosphoserine: S1236, S1240, S1242, S1289, S1295, and S1327.

The protein belongs to the periaxin family. Homodimer (via PDZ domain). Interacts with SCN10A. Found in a complex with SCN10A. Interacts with DRP2. Identified in a dystroglycan complex that contains at least PRX, DRP2, UTRN, DMD and DAG1. Detected in a complex composed of at least EZR, AHNAK, PPL and PRX. Identified in a complex with EZR, AHNAK, BFSP1, BFSP2, ANK2, PLEC, VIM and spectrin. As to expression, detected in eye lens (at protein level).

The protein resides in the nucleus. Its subcellular location is the cytoplasm. It localises to the cell membrane. It is found in the cell junction. The protein localises to the adherens junction. Functionally, scaffolding protein that functions as part of a dystroglycan complex in Schwann cells, and as part of EZR and AHNAK-containing complexes in eye lens fiber cells. Required for the maintenance of the peripheral myelin sheath that is essential for normal transmission of nerve impulses and normal perception of sensory stimuli. Required for normal transport of MBP mRNA from the perinuclear to the paranodal regions. Required for normal remyelination after nerve injury. Required for normal elongation of Schwann cells and normal length of the internodes between the nodes of Ranvier. The demyelinated nodes of Ranvier permit saltatory transmission of nerve impulses; shorter internodes cause slower transmission of nerve impulses. Required for the formation of appositions between the abaxonal surface of the myelin sheath and the Schwann cell plasma membrane; the Schwann cell cytoplasm is restricted to regions between these appositions. Required for the formation of Cajal bands and of Schmidt-Lanterman incisures that correspond to short, cytoplasm-filled regions on myelinated nerves. Recruits DRP2 to the Schwann cell plasma membrane. Required for normal protein composition of the eye lens fiber cell plasma membrane and normal eye lens fiber cell morphology. The sequence is that of Periaxin (PRX) from Bos taurus (Bovine).